Here is a 99-residue protein sequence, read N- to C-terminus: Large ribosomal subunit protein eL36 (99 aa).

Belongs to the eukaryotic ribosomal protein eL36 family. As to quaternary structure, component of the large ribosomal subunit. Mature ribosomes consist of a small (40S) and a large (60S) subunit. The 40S subunit contains about 32 different proteins and 1 molecule of RNA (18S). The 60S subunit contains 45 different proteins and 3 molecules of RNA (25S, 5.8S and 5S).

The protein localises to the cytoplasm. Its function is as follows. Component of the ribosome, a large ribonucleoprotein complex responsible for the synthesis of proteins in the cell. The small ribosomal subunit (SSU) binds messenger RNAs (mRNAs) and translates the encoded message by selecting cognate aminoacyl-transfer RNA (tRNA) molecules. The large subunit (LSU) contains the ribosomal catalytic site termed the peptidyl transferase center (PTC), which catalyzes the formation of peptide bonds, thereby polymerizing the amino acids delivered by tRNAs into a polypeptide chain. The nascent polypeptides leave the ribosome through a tunnel in the LSU and interact with protein factors that function in enzymatic processing, targeting, and the membrane insertion of nascent chains at the exit of the ribosomal tunnel. In Candida albicans (strain SC5314 / ATCC MYA-2876) (Yeast), this protein is Large ribosomal subunit protein eL36.